The following is a 475-amino-acid chain: uncharacterized protein (475 aa).

This is an uncharacterized protein from Schizosaccharomyces pombe (strain 972 / ATCC 24843) (Fission yeast).